We begin with the raw amino-acid sequence, 631 residues long: Methanol dehydrogenase [cytochrome c] subunit 1 (631 aa).

The first 32 residues, 1 to 32, serve as a signal peptide directing secretion; it reads MNRNTPKARGASSLAMAVAMGLAVLTTAPATA. A disulfide bond links Cys-135 and Cys-136. Ca(2+)-binding residues include Glu-209 and Asn-293. Asp-335 (proton acceptor) is an active-site residue. Cys-418 and Cys-447 are joined by a disulfide.

Belongs to the bacterial PQQ dehydrogenase family. In terms of assembly, heterotetramer composed of 2 alpha and 2 beta subunits. It depends on pyrroloquinoline quinone as a cofactor. The cofactor is Ca(2+).

Its subcellular location is the periplasm. The catalysed reaction is 2 Fe(III)-[cytochrome cL] + a primary alcohol = 2 Fe(II)-[cytochrome cL] + an aldehyde + 2 H(+). Its function is as follows. Catalyzes the oxidation of primary alcohols including methanol. This Paracoccus denitrificans protein is Methanol dehydrogenase [cytochrome c] subunit 1 (moxF).